The sequence spans 281 residues: Oxidase pynE (281 aa).

The protein belongs to the avfA family.

It participates in secondary metabolite biosynthesis. In terms of biological role, oxidase; part of the gene cluster that mediates the biosynthesis of pyranonigrins, a family of antioxidative compounds. The first step of pyranonigrins biosynthesis is performed by the hybrid PKS-NRPS synthetase that condenses 6 malonyl-CoA units to an acetyl starter unit, to form a 1,3,5-trioxotetradecane-6,8-dienyl-ACP. The enoyl reductase (ER) domain of pynA is likely to be functional during the first two rounds of polyketide chain extension, to generate the saturated C-C bonds of the alkyl side chain. PynA subsequently forms the amide bond between the acyl chain and L-serine. Although pynA has a terminal reductase domain, it appears to require the thioesterase pynI for the release of the straight-chain intermediate from pynA via the formation of a tetramic acid pyranonigrin J. The methyltransferase pynC then coverts pyranonigrin J to pyranonigrin I via N-methylation. The FAD-dependent monooxygenase pynG catalyzes an epoxidation-mediated cyclization to form the dihydro-gamma-pyrone moiety, followed by pynD-catalyzed oxidation of the alcohol to the ketone and enolization to yield the characteristic tetramic acid-fused gamma-pyrone core of pyranonigrin H. Pyranonigrin H is substrate of pynH for dehydration-mediated exo-methylene formation from the serine side chain to produce pyranonigrin E, before the oxidase pynE reduces the exo-methylene of pyranonigrin E into a pendant methyl to form pyranonigrin G. The FAD-linked oxidoreductase pynB performs the reverse reaction and converts pyranonigrin G back to pyranonigrin E. The polypeptide is Oxidase pynE (Aspergillus niger (strain ATCC MYA-4892 / CBS 513.88 / FGSC A1513)).